We begin with the raw amino-acid sequence, 98 residues long: Small ribosomal subunit protein bS6 (98 aa).

The protein belongs to the bacterial ribosomal protein bS6 family.

Binds together with bS18 to 16S ribosomal RNA. This chain is Small ribosomal subunit protein bS6, found in Staphylococcus aureus (strain NCTC 8325 / PS 47).